The primary structure comprises 408 residues: CinA-like protein (408 aa).

The protein belongs to the CinA family.

The sequence is that of CinA-like protein from Anaeromyxobacter dehalogenans (strain 2CP-C).